Reading from the N-terminus, the 571-residue chain is Glutamate--tRNA ligase (571 aa).

Positions 110–120 match the 'HIGH' region motif; it reads PNPNGPGTLGS.

This sequence belongs to the class-I aminoacyl-tRNA synthetase family. Glutamate--tRNA ligase type 2 subfamily.

It is found in the cytoplasm. It carries out the reaction tRNA(Glu) + L-glutamate + ATP = L-glutamyl-tRNA(Glu) + AMP + diphosphate. Its function is as follows. Catalyzes the attachment of glutamate to tRNA(Glu) in a two-step reaction: glutamate is first activated by ATP to form Glu-AMP and then transferred to the acceptor end of tRNA(Glu). The chain is Glutamate--tRNA ligase from Methanosarcina acetivorans (strain ATCC 35395 / DSM 2834 / JCM 12185 / C2A).